Reading from the N-terminus, the 389-residue chain is MNNIVHKLKTLVLNEAFGGVLLIVCTLLALLVQNGSFSEHYREFLNLKVGFSVGEFELNKPFLLWINDGLISIFFFAIGLELKKEFLHGDFKNPKNIVLPFMAALGGILIPAMLFALVNIGDAYTLKGWAIPTATDTAFALAILMMCGKHIPSSLKIFLLSLAIFDDVGAILIIAIFYTTKLSIVAFVVAGIAILAMLVLNILGITRKSFYFICSVILWISVLKSGVHATLAGIITAFFIPMQTKNGEAFLEEIYESLKFWLAFVILPLFAFANAGVNLSNIDIGAIFSGVSVGIFLGLFVGKQVGVFLFSYLAIRFKFAALPQGSNLKQLYGVCILTGIGFTMSLFIDGLAYEVSDIFNYADNLAILIASFCSGIWGFIYLKFFAARS.

Transmembrane regions (helical) follow at residues 12 to 32 (VLNE…ALLV), 62 to 82 (FLLW…GLEL), 97 to 117 (IVLP…LFAL), 128 to 148 (GWAI…MMCG), 157 to 177 (IFLL…IAIF), 184 to 204 (IVAF…NILG), 220 to 240 (ISVL…AFFI), 260 to 280 (FWLA…VNLS), 282 to 302 (IDIG…LFVG), 331 to 351 (LYGV…IDGL), and 365 to 385 (LAIL…LKFF).

Belongs to the NhaA Na(+)/H(+) (TC 2.A.33) antiporter family.

It is found in the cell inner membrane. It catalyses the reaction Na(+)(in) + 2 H(+)(out) = Na(+)(out) + 2 H(+)(in). Na(+)/H(+) antiporter that extrudes sodium in exchange for external protons. This is Na(+)/H(+) antiporter NhaA 1 from Campylobacter jejuni subsp. jejuni serotype O:6 (strain 81116 / NCTC 11828).